The chain runs to 339 residues: Centromere protein N (339 aa).

Phosphoserine occurs at positions 226, 235, and 282.

It belongs to the CENP-N/CHL4 family. Component of the CENPA-NAC complex, at least composed of CENPA, CENPC, CENPH, CENPM, CENPN, CENPT and CENPU. The CENPA-NAC complex interacts with the CENPA-CAD complex, composed of CENPI, CENPK, CENPL, CENPO, CENPP, CENPQ, CENPR and CENPS. Interacts directly with CENPA. Identified in a centromere complex containing histones H2A, H2B and H4, and at least CENPA, CENPB, CENPC, CENPT, CENPN, HJURP, SUPT16H, SSRP1 and RSF1.

It localises to the nucleus. The protein localises to the chromosome. Its subcellular location is the centromere. The protein resides in the kinetochore. Its function is as follows. Component of the CENPA-NAC (nucleosome-associated) complex, a complex that plays a central role in assembly of kinetochore proteins, mitotic progression and chromosome segregation. The CENPA-NAC complex recruits the CENPA-CAD (nucleosome distal) complex and may be involved in incorporation of newly synthesized CENPA into centromeres. CENPN is the first protein to bind specifically to CENPA nucleosomes and the direct binding of CENPA nucleosomes by CENPN is required for centromere assembly. Required for chromosome congression and efficiently align the chromosomes on a metaphase plate. This Homo sapiens (Human) protein is Centromere protein N (CENPN).